A 247-amino-acid polypeptide reads, in one-letter code: MNSAYHRHVAFPSGLGTSTSRQLHSMVPMVLVPVGSTEQHGPHLPLDTDTRIAAAVAGTVVEQFGAPADRDAVVAPPVAYGASGEHEGFPGTVSIGTAALELLLVEYGRSASKWTSRIVFVNGHGGNVEALAAAVALLRYEGRDAGWVPCSVPDADAHAGHTETSVLLHISPDDVLTDELVCGNTAPLAELMPRMRSGGVAAVSELGILGDPTTATAAEGERIFAEMVNGCADRIKRWQPDRNGLLT.

A divalent metal cation-binding residues include glutamate 38, histidine 40, aspartate 49, histidine 124, and glutamate 163.

Belongs to the creatininase superfamily. In terms of assembly, homooctamer. Requires Fe(2+) as cofactor. It depends on Zn(2+) as a cofactor.

It catalyses the reaction [mycofactocin precursor peptide]-C-terminal glycyl-N-{5-[(4-hydroxyphenyl)methyl]-4,4-dimethyl-2-oxopyrrolidin-3-yl}acetamide + H2O = [mycofactocin precursor peptide]-C-terminal glycine + 3-amino-5-[(4-hydroxyphenyl)methyl]-4,4-dimethyl-2-pyrrolidin-2-one. Peptidase involved in the biosynthesis of the enzyme cofactor mycofactocin (MFT). Catalyzes cleavage of the MftC-modified MftA peptide to liberate its final two residues, which consist of a cross-linked valine-decarboxylated tyrosine dipeptide (named 3-amino-5-[(4-hydroxyphenyl)methyl]-4,4-dimethyl-2-pyrrolidin-2-one or ADHP). Is required for the in vivo ethanol assimilation in M.smegmatis. This Mycolicibacterium smegmatis (strain ATCC 700084 / mc(2)155) (Mycobacterium smegmatis) protein is Mycofactocin precursor peptide peptidase.